The primary structure comprises 408 residues: uncharacterized protein (408 aa).

Disordered regions lie at residues 218-265 and 367-408; these read EPTA…TSER and MESE…ETPN. Residues 369 to 379 are compositionally biased toward low complexity; it reads SEVINSSSSTS. The span at 394 to 408 shows a compositional bias: acidic residues; the sequence is IVEEVPETAENETPN.

The protein to C.elegans C05E11.1.

This is an uncharacterized protein from Arabidopsis thaliana (Mouse-ear cress).